Reading from the N-terminus, the 647-residue chain is DNA ligase (647 aa).

Residues 30-34 (DEEYD), 79-80 (SM), and E105 each bind NAD(+). Catalysis depends on K107, which acts as the N6-AMP-lysine intermediate. NAD(+) is bound by residues R128, E162, and K301. 4 residues coordinate Zn(2+): C395, C398, C411, and C416. The BRCT domain occupies 570-647 (KSDGVIFGKT…ESAFNELVKE (78 aa)).

It belongs to the NAD-dependent DNA ligase family. LigA subfamily. Requires Mg(2+) as cofactor. Mn(2+) serves as cofactor.

It catalyses the reaction NAD(+) + (deoxyribonucleotide)n-3'-hydroxyl + 5'-phospho-(deoxyribonucleotide)m = (deoxyribonucleotide)n+m + AMP + beta-nicotinamide D-nucleotide.. In terms of biological role, DNA ligase that catalyzes the formation of phosphodiester linkages between 5'-phosphoryl and 3'-hydroxyl groups in double-stranded DNA using NAD as a coenzyme and as the energy source for the reaction. It is essential for DNA replication and repair of damaged DNA. The polypeptide is DNA ligase (Campylobacter jejuni subsp. jejuni serotype O:23/36 (strain 81-176)).